Consider the following 523-residue polypeptide: Cysteine-rich secretory protein LCCL domain-containing 1 (523 aa).

The signal sequence occupies residues 1–23; sequence MKYVVQEWLRITTLLFIAQAVSA. The SCP domain maps to 66 to 206; the sequence is LDLHNKLRGQ…PKAVYLVCNY (141 aa). The tract at residues 246 to 298 is disordered; the sequence is ERPYSPHEPEEETNEIERQRSKAQDATAQSRPRTHSPSGSTGSEDSEKNEVIS. Polar residues predominate over residues 269–288; that stretch reads QDATAQSRPRTHSPSGSTGS. 2 LCCL domains span residues 302 to 397 and 403 to 505; these read MSQI…ANSF and TVQA…PGKQ. 4 cysteine pairs are disulfide-bonded: C308-C326, C330-C350, C409-C431, and C435-C458.

The protein belongs to the CRISP family.

The protein localises to the secreted. The chain is Cysteine-rich secretory protein LCCL domain-containing 1 (CRISPLD1) from Gallus gallus (Chicken).